The primary structure comprises 388 residues: Succinate--CoA ligase [ADP-forming] subunit beta (388 aa).

The 236-residue stretch at 9-244 (KALFAEYGLP…PSQDDAREAH (236 aa)) folds into the ATP-grasp domain. ATP is bound by residues Lys46, 53-55 (GRG), Glu99, Thr102, and Glu107. Positions 199 and 213 each coordinate Mg(2+). Substrate-binding positions include Asn264 and 321–323 (GIV).

It belongs to the succinate/malate CoA ligase beta subunit family. In terms of assembly, heterotetramer of two alpha and two beta subunits. Mg(2+) serves as cofactor.

The enzyme catalyses succinate + ATP + CoA = succinyl-CoA + ADP + phosphate. It carries out the reaction GTP + succinate + CoA = succinyl-CoA + GDP + phosphate. Its pathway is carbohydrate metabolism; tricarboxylic acid cycle; succinate from succinyl-CoA (ligase route): step 1/1. Functionally, succinyl-CoA synthetase functions in the citric acid cycle (TCA), coupling the hydrolysis of succinyl-CoA to the synthesis of either ATP or GTP and thus represents the only step of substrate-level phosphorylation in the TCA. The beta subunit provides nucleotide specificity of the enzyme and binds the substrate succinate, while the binding sites for coenzyme A and phosphate are found in the alpha subunit. The polypeptide is Succinate--CoA ligase [ADP-forming] subunit beta (Shewanella sediminis (strain HAW-EB3)).